The chain runs to 315 residues: Acetaldehyde dehydrogenase 2 (315 aa).

Residue 15–18 (SGNI) participates in NAD(+) binding. C135 functions as the Acyl-thioester intermediate in the catalytic mechanism. NAD(+) contacts are provided by residues 166–174 (SAGPGTRAN) and N293.

The protein belongs to the acetaldehyde dehydrogenase family.

It carries out the reaction acetaldehyde + NAD(+) + CoA = acetyl-CoA + NADH + H(+). In Paraburkholderia phymatum (strain DSM 17167 / CIP 108236 / LMG 21445 / STM815) (Burkholderia phymatum), this protein is Acetaldehyde dehydrogenase 2.